The sequence spans 1261 residues: Mediator of RNA polymerase II transcription subunit 14 (1261 aa).

Over residues 1-11 (MPNGKQQHEVT) the composition is skewed to basic and acidic residues. 3 disordered regions span residues 1–21 (MPNG…EIPH), 413–435 (NETA…GETE), and 1193–1220 (DNDI…ENET). A compositionally biased stretch (acidic residues) spans 417 to 427 (IVDDNDNDNDD). Over residues 1205–1220 (QNEKENSKTTSKENET) the composition is skewed to basic and acidic residues.

The protein belongs to the Mediator complex subunit 14 family. In terms of assembly, component of the Mediator complex.

The protein resides in the nucleus. In terms of biological role, component of the Mediator complex, a coactivator involved in the regulated transcription of nearly all RNA polymerase II-dependent genes. Mediator functions as a bridge to convey information from gene-specific regulatory proteins to the basal RNA polymerase II transcription machinery. Mediator is recruited to promoters by direct interactions with regulatory proteins and serves as a scaffold for the assembly of a functional preinitiation complex with RNA polymerase II and the general transcription factors. This is Mediator of RNA polymerase II transcription subunit 14 (MED14) from Candida albicans (strain SC5314 / ATCC MYA-2876) (Yeast).